The following is an 821-amino-acid chain: Cation/H(+) antiporter 15 (821 aa).

The next 13 membrane-spanning stretches (helical) occupy residues 37 to 57 (LPLF…FVFI), 65 to 82 (RVIS…SVLG), 97 to 117 (VMVL…LVGV), 131 to 151 (ALTI…AFSF), 166 to 186 (ILFL…RILA), 200 to 220 (MSAA…AIAL), 228 to 248 (FASL…VFVV), 268 to 288 (FHIC…DAIG), 292 to 312 (VFGA…LTLI), 318 to 338 (FVSG…TNIA), 350 to 370 (FLVI…VAFF), 378 to 398 (GITL…VLNV), and 410 to 430 (FATM…IVTI). The interval 800 to 821 (DFPESPVHSHETKVTYGLENPR) is disordered.

It belongs to the monovalent cation:proton antiporter 2 (CPA2) transporter (TC 2.A.37) family. CHX (TC 2.A.37.4) subfamily. In terms of tissue distribution, specifically expressed in pollen.

The protein localises to the membrane. In terms of biological role, may operate as a cation/H(+) antiporter. This chain is Cation/H(+) antiporter 15 (CHX15), found in Arabidopsis thaliana (Mouse-ear cress).